Consider the following 185-residue polypeptide: 3-hexulose-6-phosphate isomerase (185 aa).

An SIS domain is found at 29–172; the sequence is LADHILSSHQ…ILKLMEKKGL (144 aa). Residues serine 47 and 86–91 contribute to the substrate site; that span reads SGSGET. Glutamate 152 (proton acceptor) is an active-site residue.

This sequence belongs to the SIS family. PHI subfamily. Homotetramer.

The catalysed reaction is D-arabino-hex-3-ulose 6-phosphate = beta-D-fructose 6-phosphate. It functions in the pathway one-carbon metabolism; formaldehyde assimilation via RuMP pathway; D-fructose 6-phosphate from D-ribulose 5-phosphate and formaldehyde: step 2/2. In terms of biological role, catalyzes the isomerization between 3-hexulose 6-phosphate and fructose 6-phosphate. Together with HxlA, may act as a formaldehyde detoxification system. In Bacillus subtilis (strain 168), this protein is 3-hexulose-6-phosphate isomerase (hxlB).